Here is a 288-residue protein sequence, read N- to C-terminus: ATP phosphoribosyltransferase (288 aa).

It belongs to the ATP phosphoribosyltransferase family. Long subfamily. Mg(2+) serves as cofactor.

It localises to the cytoplasm. It catalyses the reaction 1-(5-phospho-beta-D-ribosyl)-ATP + diphosphate = 5-phospho-alpha-D-ribose 1-diphosphate + ATP. The protein operates within amino-acid biosynthesis; L-histidine biosynthesis; L-histidine from 5-phospho-alpha-D-ribose 1-diphosphate: step 1/9. With respect to regulation, feedback inhibited by histidine. Its function is as follows. Catalyzes the condensation of ATP and 5-phosphoribose 1-diphosphate to form N'-(5'-phosphoribosyl)-ATP (PR-ATP). Has a crucial role in the pathway because the rate of histidine biosynthesis seems to be controlled primarily by regulation of HisG enzymatic activity. This Methanococcus maripaludis (strain C5 / ATCC BAA-1333) protein is ATP phosphoribosyltransferase.